Reading from the N-terminus, the 274-residue chain is 2,3,4,5-tetrahydropyridine-2,6-dicarboxylate N-succinyltransferase (274 aa).

Substrate is bound by residues Arg-104 and Asp-141.

It belongs to the transferase hexapeptide repeat family. In terms of assembly, homotrimer.

It is found in the cytoplasm. The catalysed reaction is (S)-2,3,4,5-tetrahydrodipicolinate + succinyl-CoA + H2O = (S)-2-succinylamino-6-oxoheptanedioate + CoA. It functions in the pathway amino-acid biosynthesis; L-lysine biosynthesis via DAP pathway; LL-2,6-diaminopimelate from (S)-tetrahydrodipicolinate (succinylase route): step 1/3. The chain is 2,3,4,5-tetrahydropyridine-2,6-dicarboxylate N-succinyltransferase from Buchnera aphidicola subsp. Acyrthosiphon pisum (strain APS) (Acyrthosiphon pisum symbiotic bacterium).